The sequence spans 314 residues: Ribonuclease Z (314 aa).

Residues His62, His64, Asp66, His67, His144, Asp215, and His273 each contribute to the Zn(2+) site. Asp66 acts as the Proton acceptor in catalysis.

It belongs to the RNase Z family. As to quaternary structure, homodimer. The cofactor is Zn(2+).

It catalyses the reaction Endonucleolytic cleavage of RNA, removing extra 3' nucleotides from tRNA precursor, generating 3' termini of tRNAs. A 3'-hydroxy group is left at the tRNA terminus and a 5'-phosphoryl group is left at the trailer molecule.. In terms of biological role, zinc phosphodiesterase, which displays some tRNA 3'-processing endonuclease activity. Probably involved in tRNA maturation, by removing a 3'-trailer from precursor tRNA. This chain is Ribonuclease Z, found in Prochlorococcus marinus (strain NATL2A).